Consider the following 849-residue polypeptide: Lysine-specific histone demethylase 1 homolog 1 (849 aa).

Positions 1 to 118 are disordered; that stretch reads MEEGSEAQPP…RRRRKKQFPG (118 aa). Composition is skewed to low complexity over residues 34–67 and 89–103; these read GQAAAAEAMEGEAEGAAAAAGTIEGEAGYAAADA and PTSSAPSATAAVDDS. Over residues 106–115 the composition is skewed to basic residues; sequence ARKRRRRKKQ. The SWIRM domain occupies 159–260; it reads ARELDAEALI…FGLAPSVISL (102 aa). Glutamate 300, arginine 302, arginine 308, and glutamate 688 together coordinate FAD.

The protein belongs to the flavin monoamine oxidase family. FAD serves as cofactor.

Its function is as follows. Probable histone demethylase. This Oryza sativa subsp. japonica (Rice) protein is Lysine-specific histone demethylase 1 homolog 1.